The sequence spans 433 residues: uncharacterized protein (433 aa).

Residues 1–26 (MTRRAEFEMGLFVILQSMFLISLCSS) form the signal peptide. N-linked (GlcNAc...) asparagine glycans are attached at residues asparagine 59, asparagine 72, asparagine 125, asparagine 159, asparagine 210, asparagine 275, asparagine 282, and asparagine 323. The GPI-anchor amidated alanine moiety is linked to residue alanine 405. A propeptide spans 406-433 (SSQPRLHDEGVTRLVIFVLSMLLVMLLS) (removed in mature form).

It localises to the cell membrane. This is an uncharacterized protein from Arabidopsis thaliana (Mouse-ear cress).